Consider the following 549-residue polypeptide: MRRPRGEPGPRAPRPTEGATCAGPGESWSPSPNSMLRVLLSAQTSPARLSGLLLIPPVQPCCLGPSKWGDRPVGGGPSAGPVQGLQRLLEQAKSPGELLRWLGQNPSKVRAHHYSVALRRLGQLLGSRPRPPPVEQVTLQDLSQLIIRNCPSFDIHTIHVCLHLAVLLGFPSDGPLVCALEQERRLRLPPKPPPPLQPLLRGGQGLEAALSCPRFLRYPRQHLISSLAEARPEELTPHVMVLLAQHLARHRLREPQLLEAIAHFLVVQETQLSSKVVQKLVLPFGRLNYLPLEQQFMPCLERILAREAGVAPLATVNILMSLCQLRCLPFRALHFVFSPGFINYISGTPHALIVRRYLSLLDTAVELELPGYRGPRLPRRQQVPIFPQPLITDRARCKYSHKDIVAEGLRQLLGEEKYRQDLTVPPGYCTDFLLCASSSGAVLPVRTQDPFLPYPPRSCPQGQAASSATTRDPAQRVVLVLRERWHFCRDGRVLLGSRALRERHLGLMGYQLLPLPFEELESQRGLPQLKSYLRQKLQALGLRWGPEGG.

Residues 1 to 30 (MRRPRGEPGPRAPRPTEGATCAGPGESWSP) form a disordered region. Positions 477–535 (VVLVLRERWHFCRDGRVLLGSRALRERHLGLMGYQLLPLPFEELESQRGLPQLKSYLRQ) constitute an RAP domain.

It belongs to the FAST protein kinase family. Interacts with TIA1; the interactions leads to TIA1 phosphorylation. Interacts with TIAR. In terms of processing, autophosphorylated on serine/threonine residues. Activated by dephosphorylation. As to expression, expressed in heart, brain, placenta, lung, liver, skeletal muscle, kidney and pancreas.

It localises to the mitochondrion matrix. The catalysed reaction is L-seryl-[Fas-activated protein] + ATP = O-phospho-L-seryl-[Fas-activated protein] + ADP + H(+). It catalyses the reaction L-threonyl-[Fas-activated protein] + ATP = O-phospho-L-threonyl-[Fas-activated protein] + ADP + H(+). The enzyme catalyses L-seryl-[protein] + ATP = O-phospho-L-seryl-[protein] + ADP + H(+). It carries out the reaction L-threonyl-[protein] + ATP = O-phospho-L-threonyl-[protein] + ADP + H(+). Functionally, phosphorylates the splicing regulator TIA1, thereby promoting the inclusion of FAS exon 6, which leads to an mRNA encoding a pro-apoptotic form of the receptor. In terms of biological role, required for the biogenesis of some mitochondrial-encoded mRNAs, specifically stabilizes ND6 (NADH dehydrogenase complex subunit 6) mRNA, and regulates its levels. The protein is Fas-activated serine/threonine kinase (FASTK) of Homo sapiens (Human).